Here is a 245-residue protein sequence, read N- to C-terminus: Orotidine 5'-phosphate decarboxylase (245 aa).

Residues aspartate 22, lysine 44, 71 to 80 (DLKFHDIPNT), threonine 131, arginine 192, glutamine 201, glycine 221, and arginine 222 each bind substrate. Lysine 73 acts as the Proton donor in catalysis.

Belongs to the OMP decarboxylase family. Type 1 subfamily. As to quaternary structure, homodimer.

The catalysed reaction is orotidine 5'-phosphate + H(+) = UMP + CO2. Its pathway is pyrimidine metabolism; UMP biosynthesis via de novo pathway; UMP from orotate: step 2/2. In terms of biological role, catalyzes the decarboxylation of orotidine 5'-monophosphate (OMP) to uridine 5'-monophosphate (UMP). The protein is Orotidine 5'-phosphate decarboxylase of Shigella dysenteriae serotype 1 (strain Sd197).